Consider the following 178-residue polypeptide: Nicotinamide-nucleotide adenylyltransferase (178 aa).

It belongs to the archaeal NMN adenylyltransferase family.

It localises to the cytoplasm. The enzyme catalyses beta-nicotinamide D-ribonucleotide + ATP + H(+) = diphosphate + NAD(+). It participates in cofactor biosynthesis; NAD(+) biosynthesis; NAD(+) from nicotinamide D-ribonucleotide: step 1/1. In Pyrobaculum arsenaticum (strain DSM 13514 / JCM 11321 / PZ6), this protein is Nicotinamide-nucleotide adenylyltransferase.